Consider the following 118-residue polypeptide: uncharacterized protein (118 aa).

This sequence to S.pombe tam6.

The protein resides in the mitochondrion. This is an uncharacterized protein from Saccharomyces cerevisiae (strain ATCC 204508 / S288c) (Baker's yeast).